The sequence spans 225 residues: Venom allergen 5 (225 aa).

The N-terminal stretch at 1–23 (MKISGFVYLILITTIINLSFSEA) is a signal peptide. 4 disulfides stabilise this stretch: C27-C39, C31-C124, C49-C117, and C191-C208. The SCP domain maps to 69 to 210 (KQHNEFRQKV…WHRHYLVCNY (142 aa)).

This sequence belongs to the CRISP family. Venom allergen 5-like subfamily. As to expression, expressed by the venom gland.

The protein localises to the secreted. This is Venom allergen 5 from Vespa magnifica (Hornet).